The primary structure comprises 270 residues: Glutamate 5-kinase (270 aa).

Lysine 17 contacts ATP. Positions 57, 144, and 160 each coordinate substrate. Residues serine 180–aspartate 181 and threonine 222–lysine 228 each bind ATP.

It belongs to the glutamate 5-kinase family.

It localises to the cytoplasm. It carries out the reaction L-glutamate + ATP = L-glutamyl 5-phosphate + ADP. Its pathway is amino-acid biosynthesis; L-proline biosynthesis; L-glutamate 5-semialdehyde from L-glutamate: step 1/2. Functionally, catalyzes the transfer of a phosphate group to glutamate to form L-glutamate 5-phosphate. The polypeptide is Glutamate 5-kinase (Lactococcus lactis subsp. cremoris (strain SK11)).